The primary structure comprises 222 residues: MDKTLINELGDELYQAMVQRETVTPLTSRGFDISVEDAYHISLRMLERRLAAGERVIGKKIGVTSKAVQNMLGVHQPDFGYLTDAMVYNSGEAMPISEKLIQPRAEGEIAFILKKDLMGPGVTNADVLAATECVIPCFEVVDSRIQDWKIKIQDTVADNASCGLFVLGDQAVSPRQVDLVTCGMLVEKNGQLLSTGAGAAALGSPVNCVAWLANTLGHFGIA.

The protein belongs to the hydratase/decarboxylase family.

It functions in the pathway aromatic compound metabolism; benzoate degradation via hydroxylation. Functionally, conversion of 2-hydroxypent-2,4-dienoate into 4-hydroxy-2-oxopentanoate. This Pseudomonas putida (Arthrobacter siderocapsulatus) protein is 2-hydroxypent-2,4-dienoate hydratase (xylJ).